Here is a 61-residue protein sequence, read N- to C-terminus: Aerolysin regulatory protein (61 aa).

Over residues 1–14 (MMIKRHLPQPRHRE) the composition is skewed to basic residues. Positions 1–61 (MMIKRHLPQP…GQTHTGPQIR (61 aa)) are disordered. The span at 51–61 (DGQTHTGPQIR) shows a compositional bias: polar residues.

Regulation of the expression of aerolysin. This chain is Aerolysin regulatory protein (aerC), found in Aeromonas sobria.